A 1308-amino-acid polypeptide reads, in one-letter code: Receptor tyrosine-protein kinase erbB-4 (1308 aa).

An N-terminal signal peptide occupies residues 1–25 (MKLATGLWVWGSLLMAAGTVQPSAS). At 26–652 (QSVCAGTENK…TLPQHARTPL (627 aa)) the chain is on the extracellular side. Cys-29 and Cys-56 are oxidised to a cystine. 3 N-linked (GlcNAc...) asparagine glycosylation sites follow: Asn-138, Asn-174, and Asn-181. 12 cysteine pairs are disulfide-bonded: Cys-156–Cys-186, Cys-189–Cys-197, Cys-193–Cys-205, Cys-213–Cys-221, Cys-217–Cys-229, Cys-230–Cys-238, Cys-234–Cys-246, Cys-249–Cys-258, Cys-262–Cys-289, Cys-293–Cys-304, Cys-308–Cys-323, and Cys-326–Cys-330. N-linked (GlcNAc...) asparagine glycosylation is present at Asn-253. N-linked (GlcNAc...) asparagine glycosylation is found at Asn-410, Asn-473, and Asn-495. 10 cysteine pairs are disulfide-bonded: Cys-503–Cys-512, Cys-507–Cys-520, Cys-523–Cys-532, Cys-536–Cys-552, Cys-555–Cys-569, Cys-559–Cys-577, Cys-580–Cys-589, Cys-593–Cys-614, Cys-617–Cys-625, and Cys-621–Cys-633. N-linked (GlcNAc...) asparagine glycosylation occurs at Asn-548. Asn-576 carries an N-linked (GlcNAc...) asparagine glycan. Residue Asn-620 is glycosylated (N-linked (GlcNAc...) asparagine). The chain crosses the lipid bilayer at residues 653–673 (IAAGVIGGLFILVIMALTFAV). Residues 674–1308 (YVRRKSIKKK…PPYRHRNTVV (635 aa)) lie on the Cytoplasmic side of the membrane. The short motif at 676 to 684 (RRKSIKKKR) is the Nuclear localization signal element. In terms of domain architecture, Protein kinase spans 718-985 (LKRVKVLGSG…RMARDPQRYL (268 aa)). Residues 724–732 (LGSGAFGTV), Lys-751, 797–799 (QLM), and 843–848 (DLAARN) each bind ATP. Asp-843 serves as the catalytic Proton acceptor. Phosphotyrosine; by autocatalysis occurs at positions 875, 1035, and 1056. Residues 1032 to 1035 (PPIY) carry the PPxy motif 1 motif. Residues 1117–1149 (PHVQEDSSTQRYSADPTVFAPERNPRGELDEEG) form a disordered region. 7 positions are modified to phosphotyrosine; by autocatalysis: Tyr-1150, Tyr-1162, Tyr-1188, Tyr-1202, Tyr-1242, Tyr-1258, and Tyr-1284. A PPxY motif 2 motif is present at residues 1282-1285 (PEYL). The PDZ-binding signature appears at 1290 to 1292 (LKP).

Belongs to the protein kinase superfamily. Tyr protein kinase family. EGF receptor subfamily. As to quaternary structure, monomer in the absence of bound ligand. Homodimer or heterodimer with another ERBB family member upon ligand binding, thus forming heterotetramers. Interacts with EGFR and ERBB2. Interacts with DLG2 (via its PDZ domain), DLG3 (via its PDZ domain), DLG4 (via its PDZ domain) and SNTB2 (via its PDZ domain). Interacts with MUC1. Interacts (via its PPxy motifs) with WWOX. Interacts (via the PPxY motif 3 of isoform JM-A CYT-2) with YAP1 (via the WW domain 1 of isoform 1). Interacts (isoform JM-A CYT-1 and isoform JM-B CYT-1) with WWP1. Interacts (via its intracellular domain) with TRIM28. Interacts (via the intracellular domains of both CYT-1 and CYT-2 isoforms) with KAP1; the interaction does not phosphorylate KAP1 but represses ERBB4-mediated transcriptional activity. Interacts with PRPU, DDX23, MATR3, RBM15, ILF3, KAP1, U5S1, U2SURP, ITCH, HNRNPU, AP2A1, NULC, LEO1, WWP2, IGHG1, HXK1, GRB7 and SRRT. Interacts (phosphorylated isoform JM-A CYT-1 and isoform JM-B CYT-1) with PIK3R1. Interacts with SHC1. Interacts with GRB2. Interacts (soluble intracellular domain) with BCL2. Interacts (phosphorylated) with STAT1. Interacts with CBFA2T3. Interacts (soluble intracellular domain) with STAT5A. In terms of processing, isoform JM-A CYT-1 and isoform JM-A CYT-2 are processed by ADAM17. Proteolytic processing in response to ligand or 12-O-tetradecanoylphorbol-13-acetate stimulation results in the production of 120 kDa soluble receptor forms and intermediate membrane-anchored 80 kDa fragments (m80HER4), which are further processed by a presenilin-dependent gamma-secretase to release a cytoplasmic intracellular domain (E4ICD; E4ICD1/s80Cyt1 or E4ICD2/s80Cyt2, depending on the isoform). Membrane-anchored 80 kDa fragments of the processed isoform JM-A CYT-1 are more readily degraded by the proteasome than fragments of isoform JM-A CYT-2, suggesting a prevalence of E4ICD2 over E4ICD1. Isoform JM-B CYT-1 and isoform JM-B CYT-2 lack the ADAM17 cleavage site and are not processed by ADAM17, precluding further processing by gamma-secretase. Autophosphorylated on tyrosine residues in response to ligand binding. Autophosphorylation occurs in trans, i.e. one subunit of the dimeric receptor phosphorylates tyrosine residues on the other subunit. Ligands trigger phosphorylation at specific tyrosine residues, thereby creating binding sites for scaffold proteins and effectors. Constitutively phosphorylated at a basal level when overexpressed in heterologous systems; ligand binding leads to increased phosphorylation. Phosphorylation at Tyr-1035 is important for interaction with STAT1. Phosphorylation at Tyr-1056 is important for interaction with PIK3R1. Phosphorylation at Tyr-1242 is important for interaction with SHC1. Phosphorylation at Tyr-1188 may also contribute to the interaction with SHC1. Isoform JM-A CYT-2 is constitutively phosphorylated on tyrosine residues in a ligand-independent manner. E4ICD2 but not E4ICD1 is phosphorylated on tyrosine residues. Post-translationally, ubiquitinated. During mitosis, the ERBB4 intracellular domain is ubiquitinated by the APC/C complex and targeted to proteasomal degradation. Isoform JM-A CYT-1 and isoform JM-B CYT-1 are ubiquitinated by WWP1. The ERBB4 intracellular domain (E4ICD1) is ubiquitinated, and this involves NEDD4. In terms of tissue distribution, isoform JM-A CYT-2 and isoform JM-B CYT-2 are expressed in cerebellum, cerebral cortex, spinal cord, medulla oblongata and eye, but the kidney expresses solely isoform JM-A CYT-2 and the heart solely isoform JM-B CYT-2.

The protein resides in the cell membrane. Its subcellular location is the nucleus. It localises to the mitochondrion. It catalyses the reaction L-tyrosyl-[protein] + ATP = O-phospho-L-tyrosyl-[protein] + ADP + H(+). Its activity is regulated as follows. Binding of a cognate ligand leads to dimerization and activation by autophosphorylation on tyrosine residues. In vitro kinase activity is increased by Mg(2+). Functionally, tyrosine-protein kinase that plays an essential role as cell surface receptor for neuregulins and EGF family members and regulates development of the heart, the central nervous system and the mammary gland, gene transcription, cell proliferation, differentiation, migration and apoptosis. Required for normal cardiac muscle differentiation during embryonic development, and for postnatal cardiomyocyte proliferation. Required for normal development of the embryonic central nervous system, especially for normal neural crest cell migration and normal axon guidance. Required for mammary gland differentiation, induction of milk proteins and lactation. Acts as cell-surface receptor for the neuregulins NRG1, NRG2, NRG3 and NRG4 and the EGF family members BTC, EREG and HBEGF. Ligand binding triggers receptor dimerization and autophosphorylation at specific tyrosine residues that then serve as binding sites for scaffold proteins and effectors. Ligand specificity and signaling is modulated by alternative splicing, proteolytic processing, and by the formation of heterodimers with other ERBB family members, thereby creating multiple combinations of intracellular phosphotyrosines that trigger ligand- and context-specific cellular responses. Mediates phosphorylation of SHC1 and activation of the MAP kinases MAPK1/ERK2 and MAPK3/ERK1. Isoform JM-A CYT-1 and isoform JM-B CYT-1 phosphorylate PIK3R1, leading to the activation of phosphatidylinositol 3-kinase and AKT1 and protect cells against apoptosis. Isoform JM-A CYT-1 and isoform JM-B CYT-1 mediate reorganization of the actin cytoskeleton and promote cell migration in response to NRG1. Isoform JM-A CYT-2 and isoform JM-B CYT-2 lack the phosphotyrosine that mediates interaction with PIK3R1, and hence do not phosphorylate PIK3R1, do not protect cells against apoptosis, and do not promote reorganization of the actin cytoskeleton and cell migration. Proteolytic processing of isoform JM-A CYT-1 and isoform JM-A CYT-2 gives rise to the corresponding soluble intracellular domains (4ICD) that translocate to the nucleus, promote nuclear import of STAT5A, activation of STAT5A, mammary epithelium differentiation, cell proliferation and activation of gene expression. The ERBB4 soluble intracellular domains (4ICD) colocalize with STAT5A at the CSN2 promoter to regulate transcription of milk proteins during lactation. The ERBB4 soluble intracellular domains can also translocate to mitochondria and promote apoptosis. In Mus musculus (Mouse), this protein is Receptor tyrosine-protein kinase erbB-4 (Erbb4).